Reading from the N-terminus, the 554-residue chain is 3-(3-hydroxy-phenyl)propionate/3-hydroxycinnamic acid hydroxylase (554 aa).

FAD-binding positions include 17–46 (QVAIAGAGPVGLMMANYLGQMGIDVLVVEK) and 285–295 (FRIDRVLLAGD).

This sequence belongs to the PheA/TfdB FAD monooxygenase family. The cofactor is FAD.

It carries out the reaction 3-(3-hydroxyphenyl)propanoate + NADH + O2 + H(+) = 3-(2,3-dihydroxyphenyl)propanoate + NAD(+) + H2O. The catalysed reaction is (2E)-3-(3-hydroxyphenyl)prop-2-enoate + NADH + O2 + H(+) = (2E)-3-(2,3-dihydroxyphenyl)prop-2-enoate + NAD(+) + H2O. Its pathway is aromatic compound metabolism; 3-phenylpropanoate degradation. Catalyzes the insertion of one atom of molecular oxygen into position 2 of the phenyl ring of 3-(3-hydroxyphenyl)propionate (3-HPP) and hydroxycinnamic acid (3HCI). This Escherichia coli O139:H28 (strain E24377A / ETEC) protein is 3-(3-hydroxy-phenyl)propionate/3-hydroxycinnamic acid hydroxylase.